The primary structure comprises 278 residues: NADPH-dependent 7-cyano-7-deazaguanine reductase (278 aa).

Residue 87–89 (IES) coordinates substrate. 89 to 90 (SK) serves as a coordination point for NADPH. The active-site Thioimide intermediate is the cysteine 185. Aspartate 192 acts as the Proton donor in catalysis. 224–225 (HE) is a binding site for substrate. 253-254 (RG) is a binding site for NADPH. The tract at residues 255 to 278 (GLDINPYRSTNPTFSVQNHRSFRQ) is disordered. The segment covering 261–278 (YRSTNPTFSVQNHRSFRQ) has biased composition (polar residues).

This sequence belongs to the GTP cyclohydrolase I family. QueF type 2 subfamily. In terms of assembly, homodimer.

Its subcellular location is the cytoplasm. The enzyme catalyses 7-aminomethyl-7-carbaguanine + 2 NADP(+) = 7-cyano-7-deazaguanine + 2 NADPH + 3 H(+). It functions in the pathway tRNA modification; tRNA-queuosine biosynthesis. Its function is as follows. Catalyzes the NADPH-dependent reduction of 7-cyano-7-deazaguanine (preQ0) to 7-aminomethyl-7-deazaguanine (preQ1). The protein is NADPH-dependent 7-cyano-7-deazaguanine reductase of Coxiella burnetii (strain Dugway 5J108-111).